The primary structure comprises 189 residues: Lipid A acyltransferase PagP (189 aa).

The N-terminal stretch at 1–23 is a signal peptide; the sequence is MRLKLILYFLILSCYLGIGSARA. Active-site residues include H61, D104, and S105.

This sequence belongs to the lipid A palmitoyltransferase family. In terms of assembly, homodimer.

It is found in the cell outer membrane. The enzyme catalyses a lipid A + a 1,2-diacyl-sn-glycero-3-phosphocholine = a hepta-acyl lipid A + a 2-acyl-sn-glycero-3-phosphocholine. It catalyses the reaction a lipid IVA + a 1,2-diacyl-sn-glycero-3-phosphocholine = a lipid IVB + a 2-acyl-sn-glycero-3-phosphocholine. It carries out the reaction a lipid IIA + a 1,2-diacyl-sn-glycero-3-phosphocholine = a lipid IIB + a 2-acyl-sn-glycero-3-phosphocholine. In terms of biological role, transfers a fatty acid residue from the sn-1 position of a phospholipid to the N-linked hydroxyfatty acid chain on the proximal unit of lipid A or its precursors. The chain is Lipid A acyltransferase PagP from Erwinia tasmaniensis (strain DSM 17950 / CFBP 7177 / CIP 109463 / NCPPB 4357 / Et1/99).